The following is an 85-amino-acid chain: Beta-defensin 18 (85 aa).

Residues M1 to S23 form the signal peptide. Disulfide bonds link C39–C65, C46–C60, and C50–C66.

Belongs to the beta-defensin family.

It is found in the secreted. Its function is as follows. Has antibacterial activity. This is Beta-defensin 18 (Defb18) from Rattus norvegicus (Rat).